We begin with the raw amino-acid sequence, 340 residues long: Pesticidal crystal protein Cry15Aa (340 aa).

The tract at residues 318-340 (RDYDKEHICHDQAEKYERDYDKE) is disordered.

Its function is as follows. Promotes colloidosmotic lysis by binding to the midgut epithelial cells of lepidopteran larvae. The protein is Pesticidal crystal protein Cry15Aa (cry15Aa) of Bacillus thuringiensis subsp. thompsoni.